The chain runs to 142 residues: Maximins y/Hv type 1 (142 aa).

A signal peptide spans M1–A18. Residues R19–R43 constitute a propeptide that is removed on maturation. A Phenylalanine amide modification is found at F68. Positions T72–R121 are excised as a propeptide. I141 is subject to Isoleucine amide.

This sequence belongs to the bombinin family. As to expression, expressed by the skin glands.

The protein localises to the secreted. Maximin-y shows antimicrobial activity against bacteria and against the fungus C.albicans. It has little hemolytic activity. Functionally, maximin-Hv shows antimicrobial activity against bacteria and against the fungus C.albicans. Shows strong hemolytic activity. This Bombina maxima (Giant fire-bellied toad) protein is Maximins y/Hv type 1.